Here is a 230-residue protein sequence, read N- to C-terminus: Large ribosomal subunit protein uL4 (230 aa).

Residues 51-105 (RAAARQGTHSTKTRGDVSGGGRKPYRQKGTGRARQGSMRAPQFTGGGIVHGPKLR) form a disordered region.

The protein belongs to the universal ribosomal protein uL4 family. As to quaternary structure, part of the 50S ribosomal subunit.

Its function is as follows. One of the primary rRNA binding proteins, this protein initially binds near the 5'-end of the 23S rRNA. It is important during the early stages of 50S assembly. It makes multiple contacts with different domains of the 23S rRNA in the assembled 50S subunit and ribosome. In terms of biological role, forms part of the polypeptide exit tunnel. This chain is Large ribosomal subunit protein uL4, found in Mycobacterium leprae (strain Br4923).